A 103-amino-acid chain; its full sequence is MIVTTTPNIEGYQIATYHGIVTGEAILGANVIRDLFAGITDFIGGRSGAYEKELGRARETALSEMEEAARAKGANAVVGVDLDYEVINNMLMVSASGTAVTIA.

It belongs to the UPF0145 family.

In Cereibacter sphaeroides (strain KD131 / KCTC 12085) (Rhodobacter sphaeroides), this protein is UPF0145 protein RSKD131_1772.